We begin with the raw amino-acid sequence, 486 residues long: Membrane-bound lytic murein transglycosylase F (486 aa).

The N-terminal stretch at 1–28 (MFAHTLFRKRCAIWLLAIGIFLMLGSCA) is a signal peptide. Residues 29 to 267 (EKPSELERIK…RLRERYYGHV (239 aa)) are non-LT domain. Residues 268–486 (DVLGYVGAYA…TDLMEELPPL (219 aa)) are LT domain. Residue Glu314 is part of the active site.

It in the N-terminal section; belongs to the bacterial solute-binding protein 3 family. The protein in the C-terminal section; belongs to the transglycosylase Slt family.

The protein resides in the cell outer membrane. The catalysed reaction is Exolytic cleavage of the (1-&gt;4)-beta-glycosidic linkage between N-acetylmuramic acid (MurNAc) and N-acetylglucosamine (GlcNAc) residues in peptidoglycan, from either the reducing or the non-reducing ends of the peptidoglycan chains, with concomitant formation of a 1,6-anhydrobond in the MurNAc residue.. Murein-degrading enzyme that degrades murein glycan strands and insoluble, high-molecular weight murein sacculi, with the concomitant formation of a 1,6-anhydromuramoyl product. Lytic transglycosylases (LTs) play an integral role in the metabolism of the peptidoglycan (PG) sacculus. Their lytic action creates space within the PG sacculus to allow for its expansion as well as for the insertion of various structures such as secretion systems and flagella. This Stutzerimonas stutzeri (strain A1501) (Pseudomonas stutzeri) protein is Membrane-bound lytic murein transglycosylase F.